Consider the following 406-residue polypeptide: Subtilisin-like protease CPC735_023170 (406 aa).

The signal sequence occupies residues M1–A20. A propeptide spanning residues F21–T118 is cleaved from the precursor. The Inhibitor I9 domain occupies K35–A115. N125 is a glycosylation site (N-linked (GlcNAc...) asparagine). The Peptidase S8 domain maps to T127–K406. Catalysis depends on charge relay system residues D161 and H192. An N-linked (GlcNAc...) asparagine glycan is attached at N239. The disordered stretch occupies residues N283–R309. N346 carries N-linked (GlcNAc...) asparagine glycosylation. S351 serves as the catalytic Charge relay system. The N-linked (GlcNAc...) asparagine glycan is linked to N402.

Belongs to the peptidase S8 family.

Its subcellular location is the secreted. Secreted subtilisin-like serine protease with keratinolytic activity that contributes to pathogenicity. The chain is Subtilisin-like protease CPC735_023170 from Coccidioides posadasii (strain C735) (Valley fever fungus).